The following is a 119-amino-acid chain: Beta-2-microglobulin (119 aa).

Positions 1–20 are cleaved as a signal peptide; the sequence is MARSVAVVFLMLLSVVCLDA. One can recognise an Ig-like C1-type domain in the interval 25–114; that stretch reads PQVQVYTRHP…TTLKEPKVVT (90 aa). The cysteines at positions 45 and 100 are disulfide-linked.

It belongs to the beta-2-microglobulin family. In terms of assembly, heterodimer of an alpha chain and a beta chain. Beta-2-microglobulin is the beta-chain of major histocompatibility complex class I molecules.

The protein resides in the secreted. Component of the class I major histocompatibility complex (MHC). Involved in the presentation of peptide antigens to the immune system. The chain is Beta-2-microglobulin (B2M) from Cricetulus griseus (Chinese hamster).